Reading from the N-terminus, the 348-residue chain is Sulfate/thiosulfate import ATP-binding protein CysA (348 aa).

An ABC transporter domain is found at 3 to 233 (ILIDNISKKF…PATPFVFSLL (231 aa)). 35-42 (GPSGSGKS) lines the ATP pocket.

The protein belongs to the ABC transporter superfamily. Sulfate/tungstate importer (TC 3.A.1.6) family.

It is found in the plastid. It localises to the chloroplast. The catalysed reaction is sulfate(out) + ATP + H2O = sulfate(in) + ADP + phosphate + H(+). It catalyses the reaction thiosulfate(out) + ATP + H2O = thiosulfate(in) + ADP + phosphate + H(+). Functionally, part of the ABC transporter complex involved in sulfate/thiosulfate import. Responsible for energy coupling to the transport system. In Mesostigma viride (Green alga), this protein is Sulfate/thiosulfate import ATP-binding protein CysA.